A 146-amino-acid chain; its full sequence is Globin-2B (146 aa).

The region spanning 9–146 is the Globin domain; the sequence is QLTADVKKDL…KLVGVVQAAL (138 aa). Histidine 101 contributes to the heme b binding site.

Belongs to the globin family. In terms of assembly, homodimer.

This Anadara trapezia (Sydney cockle) protein is Globin-2B.